The following is a 188-amino-acid chain: Anaphase-promoting complex subunit 10 (188 aa).

Residues 4 to 187 (NSNINSNSRL…SPEVSMFQTL (184 aa)) form the DOC domain.

Belongs to the APC10 family. The APC/C is composed of at least 13 subunits that stay tightly associated throughout the cell cycle: anapc1, anapc2, anapc3, anapc4, anapc5, anapc6, anapc7, anapc8, anapc10, anapc11, cdc20, cdc26 and cdh1.

Its subcellular location is the nucleus. Its pathway is protein modification; protein ubiquitination. Functionally, component of the anaphase promoting complex/cyclosome (APC/C), a cell cycle-regulated E3 ubiquitin-protein ligase complex that controls progression through mitosis and the G1 phase of the cell cycle. The chain is Anaphase-promoting complex subunit 10 (anapc10) from Dictyostelium discoideum (Social amoeba).